Reading from the N-terminus, the 163-residue chain is Arginine repressor (163 aa).

It belongs to the ArgR family.

The protein resides in the cytoplasm. Its pathway is amino-acid biosynthesis; L-arginine biosynthesis [regulation]. In terms of biological role, regulates arginine biosynthesis genes. The protein is Arginine repressor of Corynebacterium diphtheriae (strain ATCC 700971 / NCTC 13129 / Biotype gravis).